Here is a 112-residue protein sequence, read N- to C-terminus: Larval cuticle protein 3 (112 aa).

The first 16 residues, 1-16, serve as a signal peptide directing secretion; the sequence is MFKILLVCSLAALVAA. Residues 31–92 form the Chitin-binding type R&amp;R domain; it reads PDGFVSKLVL…PQSDLLPTPP (62 aa).

Its function is as follows. Component of the larval cuticle. This is Larval cuticle protein 3 (Lcp3) from Drosophila melanogaster (Fruit fly).